The primary structure comprises 997 residues: Mannuronan C5-epimerase AlgE5 (997 aa).

PbH1 repeat units follow at residues 133 to 155, 157 to 179, 180 to 202, 204 to 226, 257 to 279, 280 to 315, and 320 to 359; these read DRDVTLERVEIREMSGYGFDPHE, TINLTIRDSVAHDNGLDGFVADF, QIGGVFENNVSYNNDRHGFNIVT, TNDFVLSNNVAYGNGGAGLVIQR, AHDVTLQNAEIYGNGLYGVRVYG, AEDVQILDNYIHDNSQSGSYAEILLQSYDDTAGVSG, and TTGTWIEGNTIVGSANSTYGIQERADGTDYSSLYANSVSN. 10 Hemolysin-type calcium-binding repeats span residues 388–403, 406–422, 424–439, 557–573, 574–590, 695–709, 712–729, 828–839, 846–862, and 864–880; these read GTTGNDTLTGSEAHET, GLDGNDRLNGGAGNDIL, GGAGRDNLTGGAGADL, GHAGNDTLDGAGGDDIL, VGGAGRDTLTGGAGADL, GSAGNDSLQGTAADE, HGGAGRDTLSGGAGADVF, GSDGNDTLDGGS, GGAGNDSLDGGAGNDIL, and GGAGRDTLSGGSGSDIF.

The protein belongs to the D-mannuronate C5-epimerase family. Requires Ca(2+) as cofactor.

The protein resides in the secreted. The enzyme catalyses [(1-&gt;4)-beta-D-mannuronosyl](n) = [alginate](n). Its pathway is glycan biosynthesis; alginate biosynthesis. With respect to regulation, inhibited by zinc. In terms of biological role, converts beta-D-mannuronic acid (M) to alpha-L-guluronic acid (G), producing a polymer with gel-forming capacity, required for the formation of the cyst coat. The chain is Mannuronan C5-epimerase AlgE5 from Azotobacter vinelandii.